A 459-amino-acid chain; its full sequence is Sperm-tail PG-rich repeat-containing protein 2 (459 aa).

STPGR repeat units follow at residues 21 to 30, 63 to 73, 119 to 148, 157 to 203, 213 to 243, 257 to 268, 351 to 377, 400 to 410, and 433 to 443; these read VGPGSYQVPF, PGPGHYNVSEA, TLGP…NSSG, GPGP…QEKK, TPAP…FGQS, PGPGFYNVLNNT, PAPG…PRSL, GPGPAAYNPVL, and TPGPATYEISQ.

In Homo sapiens (Human), this protein is Sperm-tail PG-rich repeat-containing protein 2 (STPG2).